The sequence spans 183 residues: uncharacterized protein (183 aa).

The protein belongs to the EUO family.

This is an uncharacterized protein from Chlamydia trachomatis serovar D (strain ATCC VR-885 / DSM 19411 / UW-3/Cx).